The following is a 506-amino-acid chain: MTQAVMLQGTASDVGKSVLVAGLCRIFYQDGLRTAPFKSQNMALNSGITPDGKEMGRAQIFQAEAAGITPDVRMNPVLLKPTSDRQAQVVLMGKVATNMDAVSYHDYKPRLREQILAVYNSLAQEYDVIVLEGAGSPAEINLRDRDIVNMGMAEMAQCPVILVADIDRGGVFAAIYGTLALLHKQERDRVKGVIINKFRGDVALLYSGIEQIESLTGVPVLGVMPWLDVDLEDEDGVALQNDKYRGNAPRDITIAIVQLPHISNFTDFNALAAQPDVRIRYIRRPEALTDADLVILPGSKNTLSDLAWLRESGMADAVLQTHRQGVPVMGICGGYQMLGDTIVDEVESGLGTQPGLGLLNTITRFAQDKTTTQVNATMSGELPGWLAAAAGLPVRGYEIHMGETVLQEGCCTAMTLQKNGCSVADGAVTADGLAFGTYLHGLFDSDAFTRAVVNGLRARKGLAPWETTFCYAEHKARQFDLLAEAMRQHIDIDKIYTIMQQHQEPV.

Residues aspartate 251–phenylalanine 448 enclose the GATase cobBQ-type domain. Cysteine 332 functions as the Nucleophile in the catalytic mechanism. Histidine 440 is an active-site residue.

This sequence belongs to the CobB/CobQ family. CobQ subfamily.

The protein operates within cofactor biosynthesis; adenosylcobalamin biosynthesis. Its function is as follows. Catalyzes amidations at positions B, D, E, and G on adenosylcobyrinic A,C-diamide. NH(2) groups are provided by glutamine, and one molecule of ATP is hydrogenolyzed for each amidation. The protein is Cobyric acid synthase of Salmonella heidelberg (strain SL476).